We begin with the raw amino-acid sequence, 148 residues long: Tetratricopeptide repeat protein 32 (148 aa).

TPR repeat units lie at residues 12 to 45 (SSAA…CARH), 55 to 88 (ATAY…LPSF), and 89 to 122 (EVPY…NPGF).

This Mus musculus (Mouse) protein is Tetratricopeptide repeat protein 32 (Ttc32).